The primary structure comprises 229 residues: Translation initiation factor 6 (229 aa).

Belongs to the eIF-6 family.

Its function is as follows. Binds to the 50S ribosomal subunit and prevents its association with the 30S ribosomal subunit to form the 70S initiation complex. The polypeptide is Translation initiation factor 6 (Thermococcus kodakarensis (strain ATCC BAA-918 / JCM 12380 / KOD1) (Pyrococcus kodakaraensis (strain KOD1))).